The following is a 407-amino-acid chain: Prolyl hydroxylase EGLN2 (407 aa).

Composition is skewed to low complexity over residues 1–24 (MDSP…SSEP) and 57–75 (ASAG…TASP). 3 disordered regions span residues 1–34 (MDSP…RARM), 50–89 (CPGV…GELR), and 108–157 (AAQG…CSSG). The Bipartite nuclear localization signal signature appears at 89–134 (RPLQSEGAAALVTKGCQRLAAQGARPEAPKRKWAEDGGDAPSPSKR). Ser130 is subject to Phosphoserine. The segment at 225-235 (VSQRAIPPRSI) is beta(2)beta(3) 'finger-like' loop. The region spanning 278 to 376 (GRTKAMVACY…RYAITVWYFD (99 aa)) is the Fe2OG dioxygenase domain. 3 residues coordinate Fe cation: His297, Asp299, and His358. Residue Arg367 coordinates 2-oxoglutarate.

Interacts (preferably isoform p40) with SIAH2; the interaction targets both SIAH2 isoforms for proteasomal degradation in vitro. Interacts with LIMD1, WTIP and AJUBA. It depends on Fe(2+) as a cofactor. L-ascorbate serves as cofactor. In terms of processing, ubiquitinated by SIAH1 and/or SIAH2 in response to the unfolded protein response (UPR), leading to its degradation. In terms of tissue distribution, expressed in adult and fetal heart, brain, liver, lung, skeletal muscle, and kidney. Also expressed in testis and placenta. Highest levels in adult brain, placenta, lung, kidney, and testis. Expressed in hormone responsive tissues, including normal and cancerous mammary, ovarian and prostate epithelium.

Its subcellular location is the nucleus. It carries out the reaction L-prolyl-[protein] + 2-oxoglutarate + O2 = trans-4-hydroxy-L-prolyl-[protein] + succinate + CO2. The catalysed reaction is L-prolyl-[hypoxia-inducible factor alpha subunit] + 2-oxoglutarate + O2 = trans-4-hydroxy-L-prolyl-[hypoxia-inducible factor alpha subunit] + succinate + CO2. Functionally, prolyl hydroxylase that mediates hydroxylation of proline residues in target proteins, such as ATF4, IKBKB, CEP192 and HIF1A. Target proteins are preferentially recognized via a LXXLAP motif. Cellular oxygen sensor that catalyzes, under normoxic conditions, the post-translational formation of 4-hydroxyproline in hypoxia-inducible factor (HIF) alpha proteins. Hydroxylates a specific proline found in each of the oxygen-dependent degradation (ODD) domains (N-terminal, NODD, and C-terminal, CODD) of HIF1A. Also hydroxylates HIF2A. Has a preference for the CODD site for both HIF1A and HIF2A. Hydroxylated HIFs are then targeted for proteasomal degradation via the von Hippel-Lindau ubiquitination complex. Under hypoxic conditions, the hydroxylation reaction is attenuated allowing HIFs to escape degradation resulting in their translocation to the nucleus, heterodimerization with HIF1B, and increased expression of hypoxy-inducible genes. EGLN2 is involved in regulating hypoxia tolerance and apoptosis in cardiac and skeletal muscle. Also regulates susceptibility to normoxic oxidative neuronal death. Links oxygen sensing to cell cycle and primary cilia formation by hydroxylating the critical centrosome component CEP192 which promotes its ubiquitination and subsequent proteasomal degradation. Hydroxylates IKBKB, mediating NF-kappa-B activation in hypoxic conditions. Also mediates hydroxylation of ATF4, leading to decreased protein stability of ATF4. This Homo sapiens (Human) protein is Prolyl hydroxylase EGLN2.